The sequence spans 297 residues: Ectoine dioxygenase (297 aa).

Gln131 contacts L-ectoine. Lys137 lines the 2-oxoglutarate pocket. Residues His148, Asp150, and His249 each contribute to the Fe cation site.

The protein belongs to the PhyH family. EctD subfamily. Homodimer. Fe(2+) is required as a cofactor.

The enzyme catalyses L-ectoine + 2-oxoglutarate + O2 = 5-hydroxyectoine + succinate + CO2. Functionally, involved in the biosynthesis of 5-hydroxyectoine, called compatible solute, which helps organisms to survive extreme osmotic stress by acting as a highly soluble organic osmolyte. Catalyzes the 2-oxoglutarate-dependent selective hydroxylation of L-ectoine to yield (4S,5S)-5-hydroxyectoine. In Streptomyces anulatus (Streptomyces chrysomallus), this protein is Ectoine dioxygenase.